The chain runs to 328 residues: MIEKIWFDNHFLGKLLWPLLWPLSYLFKWIATKRKSDYQSGKKQSYRSSVPVVVVGNITAGGNGKTPVVVWLVEQLQSKGYKVGVASRGYGGKAPHYPYLLTETTTPDISGDEPVLIKQRTKAEVAVAPVRSEAVKMLEQQGVDFIITDDGLQHYALQRDIEFIVIDGKRRFGNQHYIPLGPLREGVERLSSVDFLICNGGESQENEVSMRLQPSEAINLVTGERRSVSSLSNLVAFAGIGHPPRFFETLNQLKANVVHTQGFEDHKAFEPTEIEQLMQYGEQLIMTEKDAVKCQSFAQSSWWYLPVDATFPKEKAQQILNKIIEVKE.

Thr59 to Thr66 contributes to the ATP binding site.

It belongs to the LpxK family.

The catalysed reaction is a lipid A disaccharide + ATP = a lipid IVA + ADP + H(+). The protein operates within glycolipid biosynthesis; lipid IV(A) biosynthesis; lipid IV(A) from (3R)-3-hydroxytetradecanoyl-[acyl-carrier-protein] and UDP-N-acetyl-alpha-D-glucosamine: step 6/6. Functionally, transfers the gamma-phosphate of ATP to the 4'-position of a tetraacyldisaccharide 1-phosphate intermediate (termed DS-1-P) to form tetraacyldisaccharide 1,4'-bis-phosphate (lipid IVA). The sequence is that of Tetraacyldisaccharide 4'-kinase from Aliivibrio fischeri (strain ATCC 700601 / ES114) (Vibrio fischeri).